The following is a 281-amino-acid chain: Ribosomal protein L11 methyltransferase (281 aa).

Positions 133, 154, 175, and 216 each coordinate S-adenosyl-L-methionine.

It belongs to the methyltransferase superfamily. PrmA family.

It localises to the cytoplasm. The enzyme catalyses L-lysyl-[protein] + 3 S-adenosyl-L-methionine = N(6),N(6),N(6)-trimethyl-L-lysyl-[protein] + 3 S-adenosyl-L-homocysteine + 3 H(+). Functionally, methylates ribosomal protein L11. In Campylobacter jejuni subsp. jejuni serotype O:2 (strain ATCC 700819 / NCTC 11168), this protein is Ribosomal protein L11 methyltransferase.